The following is a 211-amino-acid chain: Thymidylate kinase (211 aa).

11–18 (GPDGAGKT) provides a ligand contact to ATP.

The protein belongs to the thymidylate kinase family.

It catalyses the reaction dTMP + ATP = dTDP + ADP. In terms of biological role, phosphorylation of dTMP to form dTDP in both de novo and salvage pathways of dTTP synthesis. The sequence is that of Thymidylate kinase from Streptococcus equi subsp. zooepidemicus (strain H70).